We begin with the raw amino-acid sequence, 116 residues long: Subtilisin inhibitor-like protein 4 (116 aa).

2 disulfides stabilise this stretch: Cys-38–Cys-53 and Cys-74–Cys-104.

Belongs to the protease inhibitor I16 (SSI) family. As to quaternary structure, homodimer.

Its subcellular location is the secreted. Its function is as follows. Inhibitor of subtilisin BPN' and trypsin. This is Subtilisin inhibitor-like protein 4 from Streptomyces lavendulae.